The following is a 154-amino-acid chain: MVLSEGEWQLVLHVWAKVEADVAGHGQDILIRLFKSHPETLEKFDRFKHLKTEAEMKASEDLKKHGVTVLTALGAILKKKGHHEAELKPLAQSHATKHKIPIKYLEFISEAIIHVLHSRHPGDFGADAQGAMNKALELFRKDIAAKYKELGYQG.

The Globin domain maps to 2-148; the sequence is VLSEGEWQLV…FRKDIAAKYK (147 aa). A Phosphoserine modification is found at Ser4. His65 contacts nitrite. O2 is bound at residue His65. At Thr68 the chain carries Phosphothreonine. His94 lines the heme b pocket.

It belongs to the globin family. Monomeric.

The protein resides in the cytoplasm. Its subcellular location is the sarcoplasm. The catalysed reaction is Fe(III)-heme b-[protein] + nitric oxide + H2O = Fe(II)-heme b-[protein] + nitrite + 2 H(+). It carries out the reaction H2O2 + AH2 = A + 2 H2O. Its function is as follows. Monomeric heme protein which primary function is to store oxygen and facilitate its diffusion within muscle tissues. Reversibly binds oxygen through a pentacoordinated heme iron and enables its timely and efficient release as needed during periods of heightened demand. Depending on the oxidative conditions of tissues and cells, and in addition to its ability to bind oxygen, it also has a nitrite reductase activity whereby it regulates the production of bioactive nitric oxide. Under stress conditions, like hypoxia and anoxia, it also protects cells against reactive oxygen species thanks to its pseudoperoxidase activity. This Physeter macrocephalus (Sperm whale) protein is Myoglobin (MB).